We begin with the raw amino-acid sequence, 525 residues long: Matrix extracellular phosphoglycoprotein (525 aa).

An N-terminal signal peptide occupies residues 1 to 17 (MRVFCVGLLLFSVTWAA). 3 disordered regions span residues 24–95 (TEKT…NRQR), 187–216 (AKAH…THRI), and 237–525 (EGSG…SDGD). Composition is skewed to basic and acidic residues over residues 25–46 (EKTK…DNIG) and 64–73 (IVQERKKDLS). Composition is skewed to polar residues over residues 75–95 (SEAS…NRQR) and 200–210 (DSQAQKSPVKS). A dentonin region spans residues 242–264 (TDLQERGDNDISPFSGDGQPFKD). Residues 247–249 (RGD) carry the Cell attachment site motif. Residue Ser-256 is glycosylated (O-linked (Xyl...) (chondroitin sulfate) serine). Composition is skewed to basic and acidic residues over residues 292 to 312 (ESTH…REEN) and 319 to 328 (TRDETAKEAD). 2 N-linked (GlcNAc...) asparagine glycosylation sites follow: Asn-477 and Asn-478. Residues 507-525 (RDDSSESSDSGSSSESDGD) form an ASARM motif; interaction with PHEX region. A compositionally biased stretch (low complexity) spans 513–525 (SSDSGSSSESDGD).

It belongs to the PF07175/osteoregulin family. Interacts (via the ASARM motif) with PHEX; the interaction is zinc-dependent. In terms of processing, phosphorylated on serine residues in the ASARM motif (in vitro) by FAM20C; the phosphorylation is important for the inhibition of bone mineralization. Cleaved by CTSB/cathepsin B; the cleavage is blocked by metalloprotease PHEX. In terms of tissue distribution, detected in urine (at protein level). Expressed by osteoblasts. Expressed by stem cells in dental pulp. Expressed by mesenchymal cells in dental papilla and dental pulp. Expressed in teeth, specifically in decidious dentin. Expressed in ondotoblasts. Expressed in salivary glands. Secreted from oncogenic hypophosphatemic tumors.

The protein resides in the secreted. It is found in the extracellular space. It localises to the extracellular matrix. Its function is as follows. Promotes renal phosphate excretion and inhibits intestinal phosphate absorption. Promotes bone mineralization by osteoblasts and cartilage mineralization by chondrocytes. Regulates the mineralization of the extracellular matrix of the craniofacial complex, such as teeth, bone and cartilage. Promotes dental pulp stem cell proliferation and differentiation. The chain is Matrix extracellular phosphoglycoprotein (MEPE) from Homo sapiens (Human).